The chain runs to 168 residues: Photosystem I assembly protein Ycf3 (168 aa).

TPR repeat units lie at residues A35–P68, S72–L105, and G120–N153.

Belongs to the Ycf3 family.

The protein resides in the plastid. The protein localises to the chloroplast thylakoid membrane. Functionally, essential for the assembly of the photosystem I (PSI) complex. May act as a chaperone-like factor to guide the assembly of the PSI subunits. This is Photosystem I assembly protein Ycf3 from Acorus calamus var. americanus (American sweet flag).